The sequence spans 161 residues: Crossover junction endodeoxyribonuclease RuvC (161 aa).

Active-site residues include Asp-7, Glu-67, and Asp-139. Mg(2+) contacts are provided by Asp-7, Glu-67, and Asp-139.

The protein belongs to the RuvC family. Homodimer which binds Holliday junction (HJ) DNA. The HJ becomes 2-fold symmetrical on binding to RuvC with unstacked arms; it has a different conformation from HJ DNA in complex with RuvA. In the full resolvosome a probable DNA-RuvA(4)-RuvB(12)-RuvC(2) complex forms which resolves the HJ. Requires Mg(2+) as cofactor.

Its subcellular location is the cytoplasm. The catalysed reaction is Endonucleolytic cleavage at a junction such as a reciprocal single-stranded crossover between two homologous DNA duplexes (Holliday junction).. The RuvA-RuvB-RuvC complex processes Holliday junction (HJ) DNA during genetic recombination and DNA repair. Endonuclease that resolves HJ intermediates. Cleaves cruciform DNA by making single-stranded nicks across the HJ at symmetrical positions within the homologous arms, yielding a 5'-phosphate and a 3'-hydroxyl group; requires a central core of homology in the junction. The consensus cleavage sequence is 5'-(A/T)TT(C/G)-3'. Cleavage occurs on the 3'-side of the TT dinucleotide at the point of strand exchange. HJ branch migration catalyzed by RuvA-RuvB allows RuvC to scan DNA until it finds its consensus sequence, where it cleaves and resolves the cruciform DNA. This chain is Crossover junction endodeoxyribonuclease RuvC, found in Syntrophotalea carbinolica (strain DSM 2380 / NBRC 103641 / GraBd1) (Pelobacter carbinolicus).